The sequence spans 144 residues: Small ribosomal subunit protein uS19 (144 aa).

It belongs to the universal ribosomal protein uS19 family.

The sequence is that of Small ribosomal subunit protein uS19 (rps15) from Dictyostelium discoideum (Social amoeba).